The sequence spans 229 residues: Prolactin (229 aa).

Residues 1-30 form the signal peptide; it reads MDSKGSAQKGSRLLLLLVVSNLLLCQGVVS. A disulfide bridge connects residues cysteine 34 and cysteine 41. Phosphoserine is present on serine 56. Asparagine 61 is a glycosylation site (N-linked (GlcNAc...) asparagine; partial). Serine 64 and serine 120 each carry phosphoserine. 2 disulfide bridges follow: cysteine 88-cysteine 204 and cysteine 221-cysteine 229.

It belongs to the somatotropin/prolactin family. As to quaternary structure, interacts with PRLR.

The protein localises to the secreted. Its function is as follows. Prolactin acts primarily on the mammary gland by promoting lactation, mammogenesis, mitogenesis and osmoregulation. The polypeptide is Prolactin (PRL) (Ovis aries (Sheep)).